Reading from the N-terminus, the 689-residue chain is Glycine--tRNA ligase beta subunit (689 aa).

Belongs to the class-II aminoacyl-tRNA synthetase family. In terms of assembly, tetramer of two alpha and two beta subunits.

It is found in the cytoplasm. It catalyses the reaction tRNA(Gly) + glycine + ATP = glycyl-tRNA(Gly) + AMP + diphosphate. This is Glycine--tRNA ligase beta subunit from Aeromonas hydrophila subsp. hydrophila (strain ATCC 7966 / DSM 30187 / BCRC 13018 / CCUG 14551 / JCM 1027 / KCTC 2358 / NCIMB 9240 / NCTC 8049).